A 623-amino-acid chain; its full sequence is E3 ubiquitin-protein ligase DTX1 (623 aa).

2 consecutive WWE domains span residues 13 to 93 (HNFG…PVRR) and 94 to 170 (NFFE…RLRR). A disordered region spans residues 224-319 (KVPSGPPPAL…RASIPPGVPA (96 aa)). The span at 227–242 (SGPPPALPPPPPPPIH) shows a compositional bias: pro residues. Positions 292–311 (GQNNLNRPGEQRTSGSSSRA) are enriched in polar residues. An RING-type zinc finger spans residues 413 to 474 (CTICMERLVT…DGSLQCPTCK (62 aa)).

Belongs to the Deltex family. In terms of assembly, may form a homo- or heterodimer with other members of the Deltex family. Probably interacts with Notch1. In terms of tissue distribution, specifically expressed in regions undergoing neuronal differentiation. Mainly colocalizes with Notch1.

It carries out the reaction S-ubiquitinyl-[E2 ubiquitin-conjugating enzyme]-L-cysteine + [acceptor protein]-L-lysine = [E2 ubiquitin-conjugating enzyme]-L-cysteine + N(6)-ubiquitinyl-[acceptor protein]-L-lysine.. It participates in protein modification; protein ubiquitination. Its function is as follows. Regulator of Notch signaling, a signaling pathway involved in cell-cell communications that regulates a broad spectrum of cell-fate determinations. Probably acts both as a positive and negative regulator of Notch, depending on the developmental and cell context. Functions as a ubiquitin ligase protein in vivo, mediating ubiquitination and promoting degradation of MEKK1, suggesting that it may regulate the Notch pathway via some ubiquitin ligase activity. This Xenopus laevis (African clawed frog) protein is E3 ubiquitin-protein ligase DTX1 (dtx1).